The following is a 352-amino-acid chain: Inhibin beta C chain (352 aa).

The first 18 residues, 1–18, serve as a signal peptide directing secretion; sequence MTSSLLLAFLLLAPTTVA. The propeptide occupies 19–236; it reads TPRAGGQCPA…VGGKHQIHRR (218 aa). 3 N-linked (GlcNAc...) asparagine glycosylation sites follow: N110, N143, and N161. 4 cysteine pairs are disulfide-bonded: C240–C248, C247–C317, C276–C349, and C280–C351.

The protein belongs to the TGF-beta family. As to quaternary structure, homodimeric or heterodimeric through association with alpha and beta subunits, linked by one or more disulfide bonds. Inhibins are heterodimers of one alpha and one beta subunit. Activins are homo- or heterodimers of beta subunits only. Expressed in benign prostatic hyperplasia.

It localises to the secreted. Functionally, inhibins and activins inhibit and activate, respectively, the secretion of follitropin by the pituitary gland. Inhibins/activins are involved in regulating a number of diverse functions such as hypothalamic and pituitary hormone secretion, gonadal hormone secretion, germ cell development and maturation, erythroid differentiation, insulin secretion, nerve cell survival, embryonic axial development or bone growth, depending on their subunit composition. Inhibins appear to oppose the functions of activins. The sequence is that of Inhibin beta C chain (INHBC) from Homo sapiens (Human).